Reading from the N-terminus, the 224-residue chain is Viral late gene transcription factor 3 (224 aa).

This sequence belongs to the orthopoxvirus VLTF-3/OPG127 family. As to quaternary structure, interacts with the late transcription elongation factor VLTF-4/OPG110. Interacts with the late transcription factors VLTF-1/OPG093.

Its function is as follows. Acts with RNA polymerase to initiate transcription from late gene promoters. In Monkeypox virus, this protein is Viral late gene transcription factor 3 (OPG127).